The chain runs to 270 residues: Plasmanylethanolamine desaturase 1 (270 aa).

3 helical membrane-spanning segments follow: residues W47–L67, P74–V94, and A161–F181. The Histidine box-1 motif lies at H186–H190. Positions H213–H217 match the Histidine box-2 motif.

This sequence belongs to the fatty acid desaturase CarF family.

The protein resides in the endoplasmic reticulum membrane. The enzyme catalyses a 1-(1,2-saturated alkyl)-2-acyl-sn-glycero-3-phosphoethanolamine + 2 Fe(II)-[cytochrome b5] + O2 + 2 H(+) = a 1-O-(1Z-alkenyl)-2-acyl-sn-glycero-3-phosphoethanolamine + 2 Fe(III)-[cytochrome b5] + 2 H2O. It catalyses the reaction a 1-O-hexadecyl-2-acyl-sn-glycero-3-phosphoethanolamine + 2 Fe(II)-[cytochrome b5] + O2 + 2 H(+) = a 1-O-(1Z-hexadecenyl)-2-acyl-sn-glycero-3-phosphoethanolamine + 2 Fe(III)-[cytochrome b5] + 2 H2O. It carries out the reaction a 1-O-octadecyl-2-acyl-sn-glycero-3-phosphoethanolamine + 2 Fe(II)-[cytochrome b5] + O2 + 2 H(+) = a 1-O-(1Z-octadecenyl)-2-acyl-sn-glycero-3-phosphoethanolamine + 2 Fe(III)-[cytochrome b5] + 2 H2O. The catalysed reaction is a 1-O-(9Z-octadecenyl)-2-acyl-sn-glycero-3-phosphoethanolamine + 2 Fe(II)-[cytochrome b5] + O2 + 2 H(+) = a 1-O-(1Z,9Z-octadecadienyl)-2-acyl-sn-glycero-3-phosphoethanolamine + 2 Fe(III)-[cytochrome b5] + 2 H2O. Its pathway is lipid metabolism; fatty acid metabolism. Plasmanylethanolamine desaturase involved in plasmalogen biogenesis in the endoplasmic reticulum membrane. Plasmalogens are glycerophospholipids with a hydrocarbon chain linked by a vinyl ether bond at the glycerol sn-1 position, and are involved in antioxidative and signaling mechanisms. This chain is Plasmanylethanolamine desaturase 1, found in Homo sapiens (Human).